Reading from the N-terminus, the 22-residue chain is leu leader peptide (22 aa).

Residues M1–S22 form a disordered region. Positions L11–S22 are enriched in low complexity.

In terms of biological role, involved in control of the biosynthesis of leucine. This is leu leader peptide (leuL) from Corynebacterium glutamicum (strain ATCC 13032 / DSM 20300 / JCM 1318 / BCRC 11384 / CCUG 27702 / LMG 3730 / NBRC 12168 / NCIMB 10025 / NRRL B-2784 / 534).